The primary structure comprises 220 residues: Deoxyribose-phosphate aldolase (220 aa).

Asp-89 (proton donor/acceptor) is an active-site residue. Lys-151 serves as the catalytic Schiff-base intermediate with acetaldehyde. Lys-180 functions as the Proton donor/acceptor in the catalytic mechanism.

This sequence belongs to the DeoC/FbaB aldolase family. DeoC type 1 subfamily.

It is found in the cytoplasm. It carries out the reaction 2-deoxy-D-ribose 5-phosphate = D-glyceraldehyde 3-phosphate + acetaldehyde. It functions in the pathway carbohydrate degradation; 2-deoxy-D-ribose 1-phosphate degradation; D-glyceraldehyde 3-phosphate and acetaldehyde from 2-deoxy-alpha-D-ribose 1-phosphate: step 2/2. Functionally, catalyzes a reversible aldol reaction between acetaldehyde and D-glyceraldehyde 3-phosphate to generate 2-deoxy-D-ribose 5-phosphate. This Lactococcus lactis subsp. lactis (strain IL1403) (Streptococcus lactis) protein is Deoxyribose-phosphate aldolase.